An 88-amino-acid polypeptide reads, in one-letter code: Co-chaperonin GroES (88 aa).

Belongs to the GroES chaperonin family. As to quaternary structure, heptamer of 7 subunits arranged in a ring. Interacts with the chaperonin GroEL.

Its subcellular location is the cytoplasm. In terms of biological role, together with the chaperonin GroEL, plays an essential role in assisting protein folding. The GroEL-GroES system forms a nano-cage that allows encapsulation of the non-native substrate proteins and provides a physical environment optimized to promote and accelerate protein folding. GroES binds to the apical surface of the GroEL ring, thereby capping the opening of the GroEL channel. This Thermodesulfovibrio yellowstonii (strain ATCC 51303 / DSM 11347 / YP87) protein is Co-chaperonin GroES.